Consider the following 545-residue polypeptide: Thermosome subunit (545 aa).

The protein belongs to the TCP-1 chaperonin family. As to quaternary structure, forms an oligomeric complex of eight-membered rings.

In terms of biological role, molecular chaperone; binds unfolded polypeptides in vitro, and has a weak ATPase activity. This Methanopyrus kandleri (strain AV19 / DSM 6324 / JCM 9639 / NBRC 100938) protein is Thermosome subunit (ths).